The following is a 252-amino-acid chain: Transmembrane ascorbate-dependent reductase CYB561 (252 aa).

N-acetylmethionine is present on Met-1. At 1 to 17 (MESPAGRTPAPGALPYY) the chain is on the cytoplasmic side. Residues 18–38 (VAFSQLLGLTVVAVTGAWLGA) form a helical membrane-spanning segment. Residues 20–221 (FSQLLGLTVV…FGAVVLYILT (202 aa)) form the Cytochrome b561 domain. Residues 39-52 (YRGGIAWESALQFN) lie on the Vesicular side of the membrane. The chain crosses the membrane as a helical span at residues 53–73 (VHPLCMIIGLVFLQGDALLVY). 3 residues coordinate heme b: His-54, Arg-74, and Lys-81. Residues 74–85 (RVFRNEAKRTTK) lie on the Cytoplasmic side of the membrane. The L-ascorbate site is built by Lys-81 and Lys-85. The chain crosses the membrane as a helical span at residues 86-106 (ILHGLLHVLAFVIALVGLVAV). Heme b-binding positions include His-88, 117–120 (DLYS), and His-122. Topologically, residues 107-125 (FDYHRKKGIADLYSLHSWC) are vesicular. The helical transmembrane segment at 126-146 (GILVFVLFLAQWLVGLGFFLF) threads the bilayer. Topologically, residues 147 to 159 (PGASFSLRSRYRP) are cytoplasmic. Arg-154 contributes to the L-ascorbate binding site. Residues 160-180 (QHVFFGAAIFLLSVGTALLGL) form a helical membrane-spanning segment. Residues His-161 and Glu-182 each contribute to the heme b site. The Vesicular segment spans residues 181–199 (KEALLFQLGTKYSAFESEG). A helical transmembrane segment spans residues 200–220 (VLANVLGLLLVAFGAVVLYIL). The Cytoplasmic portion of the chain corresponds to 221–252 (TRADWKRPLQAEEQALSMDFKTLTEGDSPSSQ). Lys-226 contributes to the heme b binding site. A phosphoserine mark is found at Ser-248 and Ser-250.

It depends on heme b as a cofactor.

The protein resides in the cytoplasmic vesicle. Its subcellular location is the secretory vesicle. The protein localises to the chromaffin granule membrane. It catalyses the reaction monodehydro-L-ascorbate radical(out) + L-ascorbate(in) = monodehydro-L-ascorbate radical(in) + L-ascorbate(out). Transmembrane reductase that uses ascorbate as an electron donor in the cytoplasm and transfers electrons across membranes to reduce monodehydro-L-ascorbate radical in the lumen of secretory vesicles. It is therefore involved the regeneration and homeostasis within secretory vesicles of ascorbate which in turn provides reducing equivalents needed to support the activity of intravesicular enzymes. The sequence is that of Transmembrane ascorbate-dependent reductase CYB561 (CYB561) from Sus scrofa (Pig).